The following is a 73-amino-acid chain: UPF0154 protein MG335.1 (73 aa).

Residues 6–26 form a helical membrane-spanning segment; it reads LALGLGIPLSLLVGMILGYFI.

Belongs to the UPF0154 family.

It localises to the membrane. This is UPF0154 protein MG335.1 from Mycoplasma genitalium (strain ATCC 33530 / DSM 19775 / NCTC 10195 / G37) (Mycoplasmoides genitalium).